The chain runs to 428 residues: MDLSGAPVPVALLRGHTHPVTSLRFYNAFLVSGDESGWVFWWSLVTRRPLAIWKAHHEAILSLVWMDETHLLTQGRDDKLYVWRLELDAQGKSGLSVKPPSSLVADDPTDYPKPWLTYSLTVNSLNFCQVAWVNGLLAKPDLDSSDKVELLEWTDGAFRVVWNDIYPRLNGIKTGIVMDLNIMNKKLIVGYEGGAVAVFDISDRNRYTPVLNYYVVSHVQPVLSVRAHPTKKEFVSSSADSLIVKHPIKDQVVPEEEMEEPEPAKNSERPPSPKIVEVEDSPELEPPKNVVRGFDVPGLELEEGIEVKEEEKPESKPLDAVNVRHSGLSSLQLDSDGDLIMTAGWDGKVRLFTYDDISKVSVFHEREGVGCVAFSTPTTSDTANPRLAKALTTRWIAVGGKDGKIELYTIQQGNEKTLGEGRSKYIRH.

WD repeat units lie at residues 15–52 (GHTH…PLAI), 55–93 (AHHE…QGKS), 122–163 (VNSL…VVWN), 171–209 (GIKT…RYTP), 217–259 (SHVQ…EEME), 323–362 (VRHS…KVSV), and 364–418 (HERE…EKTL). The segment at 250–295 (DQVVPEEEMEEPEPAKNSERPPSPKIVEVEDSPELEPPKNVVRGFD) is disordered.

This sequence belongs to the WD repeat ASA1 family. In terms of assembly, component of the ASTRA chromatin remodeling machinery complex.

The protein resides in the nucleus. In terms of biological role, component of the ASTRA complex involved in chromatin remodeling. This is ASTRA-associated protein 1 (ASA1) from Yarrowia lipolytica (strain CLIB 122 / E 150) (Yeast).